The following is a 204-amino-acid chain: Urease accessory protein UreG (204 aa).

11 to 18 (GPVGAGKT) serves as a coordination point for GTP.

This sequence belongs to the SIMIBI class G3E GTPase family. UreG subfamily. Homodimer. UreD, UreF and UreG form a complex that acts as a GTP-hydrolysis-dependent molecular chaperone, activating the urease apoprotein by helping to assemble the nickel containing metallocenter of UreC. The UreE protein probably delivers the nickel.

It localises to the cytoplasm. Facilitates the functional incorporation of the urease nickel metallocenter. This process requires GTP hydrolysis, probably effectuated by UreG. The chain is Urease accessory protein UreG from Staphylococcus saprophyticus subsp. saprophyticus (strain ATCC 15305 / DSM 20229 / NCIMB 8711 / NCTC 7292 / S-41).